We begin with the raw amino-acid sequence, 158 residues long: Disease resistance response protein DRRG49-C (158 aa).

Belongs to the BetVI family.

This chain is Disease resistance response protein DRRG49-C, found in Pisum sativum (Garden pea).